The sequence spans 1005 residues: Espin-like protein (1005 aa).

10 ANK repeats span residues 1-31 (MEAQ…RPDI), 35-64 (LGAG…LPGN), 69-99 (NGAT…GLQD), 103-132 (SGVS…AATL), 136-166 (EGAL…GVNQ), 170-200 (SGAS…DVRL), 204-234 (DGMS…GLTA), 238-267 (EGAT…PIMR), 270-299 (WGGT…DPFL), and 303-332 (DGYT…PVRV). Disordered regions lie at residues 355–383 (EERR…VPRE) and 458–480 (ADHP…AAEQ). Basic and acidic residues predominate over residues 458-469 (ADHPPEDQDQSQ). Residues 502–539 (EDDLVYLEKQINDLQLRRRCQEYESELGRLAAQLQALL) adopt a coiled-coil conformation. 4 disordered regions span residues 611-643 (LAQG…QREI), 692-729 (PRGD…GPGL), 764-794 (LEAQ…PRLG), and 951-975 (PHAS…SQGS).

As to quaternary structure, interacts with MYO3A (via C-terminus). Interacts with MYO3B (via C-terminus). Expressed in inner ear hair cells. Expressed in utricle hair bundles (at protein level). Expressed in choclea (at protein level).

The protein resides in the cell projection. The protein localises to the stereocilium. Binds to but does not cross-link actin. Required for the formation and maintenance of inner ear hair cell stereocilia and staircase formation. Essential for normal hearing. This is Espin-like protein (Espnl) from Mus musculus (Mouse).